The following is a 257-amino-acid chain: Deoxyribose-phosphate aldolase (257 aa).

Asp-102 acts as the Proton donor/acceptor in catalysis. Lys-166 serves as the catalytic Schiff-base intermediate with acetaldehyde. The active-site Proton donor/acceptor is the Lys-198.

Belongs to the DeoC/FbaB aldolase family. DeoC type 2 subfamily.

Its subcellular location is the cytoplasm. The enzyme catalyses 2-deoxy-D-ribose 5-phosphate = D-glyceraldehyde 3-phosphate + acetaldehyde. It functions in the pathway carbohydrate degradation; 2-deoxy-D-ribose 1-phosphate degradation; D-glyceraldehyde 3-phosphate and acetaldehyde from 2-deoxy-alpha-D-ribose 1-phosphate: step 2/2. Catalyzes a reversible aldol reaction between acetaldehyde and D-glyceraldehyde 3-phosphate to generate 2-deoxy-D-ribose 5-phosphate. In Shewanella halifaxensis (strain HAW-EB4), this protein is Deoxyribose-phosphate aldolase.